Reading from the N-terminus, the 403-residue chain is tRNA pseudouridine synthase 4 (403 aa).

The Nucleophile role is filled by Asp-75.

It belongs to the pseudouridine synthase TruB family.

The protein resides in the nucleus. It localises to the mitochondrion. It catalyses the reaction uridine(55) in tRNA = pseudouridine(55) in tRNA. The catalysed reaction is a uridine in mRNA = a pseudouridine in mRNA. In terms of biological role, responsible for synthesis of pseudouridine from uracil-55 in the psi GC loop of transfer RNAs. Also catalyzes pseudouridylation of mRNAs with the consensus sequence 5'-GGUUCRA-3'. The protein is tRNA pseudouridine synthase 4 (PUS4) of Saccharomyces cerevisiae (strain ATCC 204508 / S288c) (Baker's yeast).